A 103-amino-acid chain; its full sequence is Probable protease inhibitor Egf0.4b (103 aa).

A signal peptide spans 1–22 (MMSEKFALVLLVACIAFIGIET). The 53-residue stretch at 35 to 87 (CGENEAYDSMRRGCEERCDDHNPTFCFKFTTVCWCEKGYVRDKSDTCIKVEDC) folds into the TIL domain.

The protein belongs to the polydnaviridae EGF-like motif protein family.

The polypeptide is Probable protease inhibitor Egf0.4b (O11) (Microplitis demolitor bracovirus (isolate Webb) (MdBV)).